We begin with the raw amino-acid sequence, 203 residues long: Ras-related protein Rab-7L1 (203 aa).

GTP is bound by residues Ser33, Lys34, His35, Tyr36, Lys37, and Thr39. Positions 36-44 match the Effector region motif; sequence YKSTVGVDF. Thr71 is subject to Phosphothreonine; by LRRK2. A Phosphoserine; by LRRK2 modification is found at Ser72. Residues Lys126, Val156, and Lys157 each contribute to the GTP site. S-geranylgeranyl cysteine attachment occurs at residues Cys202 and Cys203.

It belongs to the small GTPase superfamily. Rab family. Interacts with LRRK2 (via the N-terminus); this interaction is direct and stimulates kinase activity. In case of Salmonella enterica serovar Typhimurium (S.typhimurium) infection, is proteolytically cleaved between Gly-41 and Val-42 by the GtgE viral protease encoded on the Gifsy-2 lysogen bacteriophage, which therefore prevents the recruitment of RAB29 to S.typhimurium-containing vacuoles. In contrast, no proteolytically cleavage is detected in S.typhi-infected cells. Ubiquitous.

It localises to the cell membrane. The protein resides in the cytoplasm. The protein localises to the perinuclear region. Its subcellular location is the golgi apparatus. It is found in the golgi apparatus membrane. It localises to the trans-Golgi network. The protein resides in the vacuole. The protein localises to the cytoskeleton. In terms of biological role, the small GTPases Rab are key regulators in vesicle trafficking. Essential for maintaining the integrity of the endosome-trans-Golgi network structure. Together with LRRK2, plays a role in the retrograde trafficking pathway for recycling proteins, such as mannose 6 phosphate receptor (M6PR), between lysosomes and the Golgi apparatus in a retromer-dependent manner. Recruits LRRK2 to the Golgi complex and stimulates LRRK2 kinase activity. Stimulates phosphorylation of RAB10 'Thr-73' by LRRK2. Regulates neuronal process morphology in the intact central nervous system (CNS). May play a role in the formation of typhoid toxin transport intermediates during Salmonella enterica serovar Typhi (S.typhi) epithelial cell infection. In Homo sapiens (Human), this protein is Ras-related protein Rab-7L1 (RAB29).